The following is a 91-amino-acid chain: Small ribosomal subunit protein bS18 (91 aa).

This sequence belongs to the bacterial ribosomal protein bS18 family. Part of the 30S ribosomal subunit. Forms a tight heterodimer with protein bS6.

Its function is as follows. Binds as a heterodimer with protein bS6 to the central domain of the 16S rRNA, where it helps stabilize the platform of the 30S subunit. The polypeptide is Small ribosomal subunit protein bS18 (Burkholderia vietnamiensis (strain G4 / LMG 22486) (Burkholderia cepacia (strain R1808))).